We begin with the raw amino-acid sequence, 129 residues long: Large ribosomal subunit protein bL20 (129 aa).

This sequence belongs to the bacterial ribosomal protein bL20 family.

Its function is as follows. Binds directly to 23S ribosomal RNA and is necessary for the in vitro assembly process of the 50S ribosomal subunit. It is not involved in the protein synthesizing functions of that subunit. The sequence is that of Large ribosomal subunit protein bL20 from Kineococcus radiotolerans (strain ATCC BAA-149 / DSM 14245 / SRS30216).